A 308-amino-acid polypeptide reads, in one-letter code: Olfactory receptor 2T6 (308 aa).

At 1-28 (MNENNETLTRGFTLMGLFTHNKCSGFFF) the chain is on the extracellular side. Asn-5 carries N-linked (GlcNAc...) asparagine glycosylation. The chain crosses the membrane as a helical span at residues 29–49 (GVICAVFFMAMIANGVMIFLI). Over 50-57 (NIDPHLHT) the chain is Cytoplasmic. The chain crosses the membrane as a helical span at residues 58 to 78 (PMYFLLSHLSVIDTLYISTIV). At 79–98 (PKMLVDYLMGEGTISFIACT) the chain is on the extracellular side. The cysteines at positions 97 and 179 are disulfide-linked. The helical transmembrane segment at 99 to 119 (AQCFLYMGFMGAEFFLLGLMA) threads the bilayer. Residues 120-145 (YDRYVAICNPLRYPVLISWRVCWMIL) lie on the Cytoplasmic side of the membrane. A helical membrane pass occupies residues 146-166 (ASSWFGGALDSFLLTPITMSL). Residues 167-203 (PFCASHQINHFFCEAPTMLRLACGDKTTYETVMYVCC) are Extracellular-facing. The chain crosses the membrane as a helical span at residues 204–224 (VAMLLIPFSVVTASYTRILIT). The Cytoplasmic segment spans residues 225-236 (VHQMTSAEGRKK). A helical membrane pass occupies residues 237 to 257 (AFATCSSHMMVVTLFYGAALY). Over 258–271 (TYTLPQSYHTPIKD) the chain is Extracellular. The helical transmembrane segment at 272–292 (KVFSAFYTILTPLLNPLIYSL) threads the bilayer. Topologically, residues 293-308 (RNRDVMGALKRVVARC) are cytoplasmic.

It belongs to the G-protein coupled receptor 1 family.

The protein localises to the cell membrane. Functionally, odorant receptor. This Homo sapiens (Human) protein is Olfactory receptor 2T6 (OR2T6).